A 689-amino-acid polypeptide reads, in one-letter code: Glycine--tRNA ligase beta subunit (689 aa).

Belongs to the class-II aminoacyl-tRNA synthetase family. As to quaternary structure, tetramer of two alpha and two beta subunits.

It localises to the cytoplasm. The catalysed reaction is tRNA(Gly) + glycine + ATP = glycyl-tRNA(Gly) + AMP + diphosphate. The polypeptide is Glycine--tRNA ligase beta subunit (Pectobacterium atrosepticum (strain SCRI 1043 / ATCC BAA-672) (Erwinia carotovora subsp. atroseptica)).